The primary structure comprises 198 residues: NAD(P)H dehydrogenase (quinone) (198 aa).

One can recognise a Flavodoxin-like domain in the interval 4 to 189 (ILVLYYSMYG…SIARYQGEYV (186 aa)). Residues 10–15 (SMYGHI) and 78–80 (TRF) contribute to the FMN site. Position 12 (Tyr-12) interacts with NAD(+). Trp-98 is a substrate binding site. FMN contacts are provided by residues 113–118 (STGTGG) and His-133.

Belongs to the WrbA family. The cofactor is FMN.

It catalyses the reaction a quinone + NADH + H(+) = a quinol + NAD(+). It carries out the reaction a quinone + NADPH + H(+) = a quinol + NADP(+). This chain is NAD(P)H dehydrogenase (quinone), found in Citrobacter koseri (strain ATCC BAA-895 / CDC 4225-83 / SGSC4696).